A 227-amino-acid polypeptide reads, in one-letter code: Cytochrome c oxidase subunit 2 (227 aa).

The Mitochondrial intermembrane portion of the chain corresponds to 1-14 (MAYPMQLGFQDATS). Residues 15 to 45 (PIMEELLHFHDHTLMIVFLISSLVLYVISLM) traverse the membrane as a helical segment. The Mitochondrial matrix segment spans residues 46-59 (LTTKLTHTSTMDAQ). Residues 60–87 (EVETIWTILPAIILILIALPSLRILYMM) traverse the membrane as a helical segment. The Mitochondrial intermembrane segment spans residues 88–227 (DEINNPSLTV…YFEKWSASML (140 aa)). Cu cation is bound by residues His161, Cys196, Glu198, Cys200, His204, and Met207. Glu198 is a Mg(2+) binding site.

It belongs to the cytochrome c oxidase subunit 2 family. In terms of assembly, component of the cytochrome c oxidase (complex IV, CIV), a multisubunit enzyme composed of 14 subunits. The complex is composed of a catalytic core of 3 subunits MT-CO1, MT-CO2 and MT-CO3, encoded in the mitochondrial DNA, and 11 supernumerary subunits COX4I, COX5A, COX5B, COX6A, COX6B, COX6C, COX7A, COX7B, COX7C, COX8 and NDUFA4, which are encoded in the nuclear genome. The complex exists as a monomer or a dimer and forms supercomplexes (SCs) in the inner mitochondrial membrane with NADH-ubiquinone oxidoreductase (complex I, CI) and ubiquinol-cytochrome c oxidoreductase (cytochrome b-c1 complex, complex III, CIII), resulting in different assemblies (supercomplex SCI(1)III(2)IV(1) and megacomplex MCI(2)III(2)IV(2)). Found in a complex with TMEM177, COA6, COX18, COX20, SCO1 and SCO2. Interacts with TMEM177 in a COX20-dependent manner. Interacts with COX20. Interacts with COX16. The cofactor is Cu cation.

It is found in the mitochondrion inner membrane. The enzyme catalyses 4 Fe(II)-[cytochrome c] + O2 + 8 H(+)(in) = 4 Fe(III)-[cytochrome c] + 2 H2O + 4 H(+)(out). Component of the cytochrome c oxidase, the last enzyme in the mitochondrial electron transport chain which drives oxidative phosphorylation. The respiratory chain contains 3 multisubunit complexes succinate dehydrogenase (complex II, CII), ubiquinol-cytochrome c oxidoreductase (cytochrome b-c1 complex, complex III, CIII) and cytochrome c oxidase (complex IV, CIV), that cooperate to transfer electrons derived from NADH and succinate to molecular oxygen, creating an electrochemical gradient over the inner membrane that drives transmembrane transport and the ATP synthase. Cytochrome c oxidase is the component of the respiratory chain that catalyzes the reduction of oxygen to water. Electrons originating from reduced cytochrome c in the intermembrane space (IMS) are transferred via the dinuclear copper A center (CU(A)) of subunit 2 and heme A of subunit 1 to the active site in subunit 1, a binuclear center (BNC) formed by heme A3 and copper B (CU(B)). The BNC reduces molecular oxygen to 2 water molecules using 4 electrons from cytochrome c in the IMS and 4 protons from the mitochondrial matrix. This chain is Cytochrome c oxidase subunit 2 (MT-CO2), found in Gazella spekei (Speke's gazelle).